A 689-amino-acid chain; its full sequence is Glycine--tRNA ligase beta subunit (689 aa).

This sequence belongs to the class-II aminoacyl-tRNA synthetase family. In terms of assembly, tetramer of two alpha and two beta subunits.

The protein localises to the cytoplasm. The enzyme catalyses tRNA(Gly) + glycine + ATP = glycyl-tRNA(Gly) + AMP + diphosphate. This chain is Glycine--tRNA ligase beta subunit, found in Shewanella woodyi (strain ATCC 51908 / MS32).